A 178-amino-acid chain; its full sequence is Peptide methionine sulfoxide reductase MsrA (178 aa).

Residue Cys-12 is part of the active site.

Belongs to the MsrA Met sulfoxide reductase family.

The catalysed reaction is L-methionyl-[protein] + [thioredoxin]-disulfide + H2O = L-methionyl-(S)-S-oxide-[protein] + [thioredoxin]-dithiol. The enzyme catalyses [thioredoxin]-disulfide + L-methionine + H2O = L-methionine (S)-S-oxide + [thioredoxin]-dithiol. Its function is as follows. Has an important function as a repair enzyme for proteins that have been inactivated by oxidation. Catalyzes the reversible oxidation-reduction of methionine sulfoxide in proteins to methionine. The chain is Peptide methionine sulfoxide reductase MsrA from Erwinia tasmaniensis (strain DSM 17950 / CFBP 7177 / CIP 109463 / NCPPB 4357 / Et1/99).